The following is a 1824-amino-acid chain: E3 ubiquitin-protein ligase UBR1 (1824 aa).

The segment at 107 to 178 adopts a UBR-type zinc-finger fold; the sequence is TVCGKVFKNG…KDQYCELHLA (72 aa). Disordered stretches follow at residues 1006 to 1043 and 1073 to 1093; these read KQAP…ENRA and ADTE…DWED. Residues 1033–1043 show a composition bias toward basic and acidic residues; that stretch reads EQAREERENRA. Residues 1126-1220 form an RING-type; atypical zinc finger; sequence FKCILCFENC…VEFQCPYCRT (95 aa).

This sequence belongs to the E3 ubiquitin-protein ligase UBR1-like family.

The catalysed reaction is S-ubiquitinyl-[E2 ubiquitin-conjugating enzyme]-L-cysteine + [acceptor protein]-L-lysine = [E2 ubiquitin-conjugating enzyme]-L-cysteine + N(6)-ubiquitinyl-[acceptor protein]-L-lysine.. The protein operates within protein modification; protein ubiquitination. Its function is as follows. E3 ubiquitin-protein ligase which is a component of the N-end rule pathway. Recognizes and binds to proteins bearing specific N-terminal residues that are destabilizing according to the N-end rule, leading to their ubiquitination and subsequent degradation. The protein is E3 ubiquitin-protein ligase UBR1 of Drosophila melanogaster (Fruit fly).